Reading from the N-terminus, the 489-residue chain is Betaine aldehyde dehydrogenase (489 aa).

2 residues coordinate K(+): T26 and D93. An NAD(+)-binding site is contributed by 150 to 152; sequence GAW. K162 serves as the catalytic Charge relay system. Residue 176–179 participates in NAD(+) binding; sequence KPSE. Position 180 (I180) interacts with K(+). Residue 229–232 coordinates NAD(+); that stretch reads GVET. L245 serves as a coordination point for K(+). E251 acts as the Proton acceptor in catalysis. 3 residues coordinate NAD(+): G253, C285, and E386. The Nucleophile role is filled by C285. A Cysteine sulfenic acid (-SOH) modification is found at C285. K(+) contacts are provided by K456 and G459. Catalysis depends on E463, which acts as the Charge relay system.

The protein belongs to the aldehyde dehydrogenase family. As to quaternary structure, dimer of dimers. K(+) is required as a cofactor.

The catalysed reaction is betaine aldehyde + NAD(+) + H2O = glycine betaine + NADH + 2 H(+). It participates in amine and polyamine biosynthesis; betaine biosynthesis via choline pathway; betaine from betaine aldehyde: step 1/1. In terms of biological role, involved in the biosynthesis of the osmoprotectant glycine betaine. Catalyzes the irreversible oxidation of betaine aldehyde to the corresponding acid. The protein is Betaine aldehyde dehydrogenase of Paraburkholderia xenovorans (strain LB400).